The chain runs to 425 residues: uncharacterized protein (425 aa).

One can recognise an HD domain in the interval 55–181 (RYAHSLGVYE…DLDTDRMDYL (127 aa)).

This is an uncharacterized protein from Mycoplasma genitalium (strain ATCC 33530 / DSM 19775 / NCTC 10195 / G37) (Mycoplasmoides genitalium).